A 300-amino-acid polypeptide reads, in one-letter code: Geranylgeranyl pyrophosphate synthase (300 aa).

M1 carries the post-translational modification N-acetylmethionine. Residues K25, R28, and H57 each contribute to the isopentenyl diphosphate site. Residues D64 and D68 each coordinate Mg(2+). R73 contacts dimethylallyl diphosphate. Residue R74 participates in isopentenyl diphosphate binding. 5 residues coordinate dimethylallyl diphosphate: K151, T152, Q185, K202, and K212.

The protein belongs to the FPP/GGPP synthase family. Homohexamer; trimer of homodimers. Requires Mg(2+) as cofactor.

Its subcellular location is the cytoplasm. The protein localises to the perinuclear region. The protein resides in the myofibril. It localises to the sarcomere. It is found in the z line. The catalysed reaction is isopentenyl diphosphate + dimethylallyl diphosphate = (2E)-geranyl diphosphate + diphosphate. The enzyme catalyses isopentenyl diphosphate + (2E)-geranyl diphosphate = (2E,6E)-farnesyl diphosphate + diphosphate. It catalyses the reaction isopentenyl diphosphate + (2E,6E)-farnesyl diphosphate = (2E,6E,10E)-geranylgeranyl diphosphate + diphosphate. The protein operates within isoprenoid biosynthesis; farnesyl diphosphate biosynthesis; farnesyl diphosphate from geranyl diphosphate and isopentenyl diphosphate: step 1/1. It participates in isoprenoid biosynthesis; geranyl diphosphate biosynthesis; geranyl diphosphate from dimethylallyl diphosphate and isopentenyl diphosphate: step 1/1. Its pathway is isoprenoid biosynthesis; geranylgeranyl diphosphate biosynthesis; geranylgeranyl diphosphate from farnesyl diphosphate and isopentenyl diphosphate: step 1/1. Catalyzes the trans-addition of the three molecules of isopentenyl diphosphate (IPP) onto dimethylallyl pyrophosphate (DMAPP) to form geranylgeranyl pyrophosphate, an important precursor of carotenoids and geranylated proteins. This is Geranylgeranyl pyrophosphate synthase from Mus musculus (Mouse).